The primary structure comprises 260 residues: Cytochrome c oxidase subunit 2 (260 aa).

Topologically, residues 1–41 are mitochondrial intermembrane; the sequence is MIVREWLFFTMAPCDAAEPWQLGFQDAATPMMQGIIDLHHD. A helical membrane pass occupies residues 42 to 58; it reads IFFFLILILVFVSWILV. Residues 59–82 lie on the Mitochondrial matrix side of the membrane; that stretch reads RALWHFHYKKNPIPQRIVHGTTIE. The chain crosses the membrane as a helical span at residues 83 to 104; sequence IIRTIFPSIILMFIAIPSFALL. The Mitochondrial intermembrane segment spans residues 105 to 260; the sequence is YSMDEVVVDP…NQLIPQTGEA (156 aa). Residues His187, Cys222, Glu224, Cys226, His230, and Met233 each contribute to the Cu cation site. Residue Glu224 participates in Mg(2+) binding.

It belongs to the cytochrome c oxidase subunit 2 family. Component of the cytochrome c oxidase (complex IV, CIV), a multisubunit enzyme composed of a catalytic core of 3 subunits and several supernumerary subunits. The complex exists as a monomer or a dimer and forms supercomplexes (SCs) in the inner mitochondrial membrane with ubiquinol-cytochrome c oxidoreductase (cytochrome b-c1 complex, complex III, CIII). Cu cation is required as a cofactor.

The protein resides in the mitochondrion inner membrane. The enzyme catalyses 4 Fe(II)-[cytochrome c] + O2 + 8 H(+)(in) = 4 Fe(III)-[cytochrome c] + 2 H2O + 4 H(+)(out). In terms of biological role, component of the cytochrome c oxidase, the last enzyme in the mitochondrial electron transport chain which drives oxidative phosphorylation. The respiratory chain contains 3 multisubunit complexes succinate dehydrogenase (complex II, CII), ubiquinol-cytochrome c oxidoreductase (cytochrome b-c1 complex, complex III, CIII) and cytochrome c oxidase (complex IV, CIV), that cooperate to transfer electrons derived from NADH and succinate to molecular oxygen, creating an electrochemical gradient over the inner membrane that drives transmembrane transport and the ATP synthase. Cytochrome c oxidase is the component of the respiratory chain that catalyzes the reduction of oxygen to water. Electrons originating from reduced cytochrome c in the intermembrane space (IMS) are transferred via the dinuclear copper A center (CU(A)) of subunit 2 and heme A of subunit 1 to the active site in subunit 1, a binuclear center (BNC) formed by heme A3 and copper B (CU(B)). The BNC reduces molecular oxygen to 2 water molecules using 4 electrons from cytochrome c in the IMS and 4 protons from the mitochondrial matrix. The chain is Cytochrome c oxidase subunit 2 (COX2) from Beta vulgaris (Sugar beet).